An 876-amino-acid chain; its full sequence is Valine--tRNA ligase (876 aa).

The short motif at 44-54 is the 'HIGH' region element; that stretch reads PNVTGKLHLGH. Residues 520–524 carry the 'KMSKS' region motif; that stretch reads KMSKS. Position 523 (Lys523) interacts with ATP. Residues 805–876 are a coiled coil; the sequence is LEGLIDMDKE…VKARIEQLKA (72 aa).

It belongs to the class-I aminoacyl-tRNA synthetase family. ValS type 1 subfamily. Monomer.

Its subcellular location is the cytoplasm. It catalyses the reaction tRNA(Val) + L-valine + ATP = L-valyl-tRNA(Val) + AMP + diphosphate. Catalyzes the attachment of valine to tRNA(Val). As ValRS can inadvertently accommodate and process structurally similar amino acids such as threonine, to avoid such errors, it has a 'posttransfer' editing activity that hydrolyzes mischarged Thr-tRNA(Val) in a tRNA-dependent manner. The protein is Valine--tRNA ligase of Staphylococcus carnosus (strain TM300).